The sequence spans 274 residues: ATP synthase subunit a (274 aa).

The next 5 helical transmembrane spans lie at 43 to 63 (TLNI…LLVF), 103 to 123 (VIAP…MMDL), 149 to 169 (DVSI…FYSI), 223 to 243 (LIFI…LSVP), and 245 to 265 (AIFH…LTIV).

The protein belongs to the ATPase A chain family. F-type ATPases have 2 components, CF(1) - the catalytic core - and CF(0) - the membrane proton channel. CF(1) has five subunits: alpha(3), beta(3), gamma(1), delta(1), epsilon(1). CF(0) has three main subunits: a(1), b(2) and c(9-12). The alpha and beta chains form an alternating ring which encloses part of the gamma chain. CF(1) is attached to CF(0) by a central stalk formed by the gamma and epsilon chains, while a peripheral stalk is formed by the delta and b chains.

It is found in the cell inner membrane. In terms of biological role, key component of the proton channel; it plays a direct role in the translocation of protons across the membrane. The chain is ATP synthase subunit a from Yersinia pestis bv. Antiqua (strain Angola).